Consider the following 445-residue polypeptide: MERAPPDGLMNASGALAGEAAAAAGGARTFSAAWTAVLAALMALLIVATVLGNALVMLAFVADSSLRTQNNFFLLNLAISDFLVGVFCIPLYVPYVLTGRWTFGRGLCKLWLVVDYLLCTSSVFNIVLISYDRFLSVTRAVSYRAQQGDTRRAVRKMVLVWVLAFLLYGPAILSWEYLSGGSSIPEGHCYAEFFYNWYFLITASTLEFFTPFLSVTFFNLSIYLNIQRRTRLRLDGGAREAGPDPLPEAQSSPPQPPPGCWGCWPKGQGESMPLHRYGVGEAGPGAEAGEAALGGGSGAAASPTSSSGSSSRGTERPRSLKRGSKPSASSASLEKRMKMVSQSITQRFRLSRDKKVAKSLAIIVSIFGLCWAPYTLLMIIRAACHGHCVPDYWYETSFWLLWANSAVNPVLYPLCHYSFRRAFTKLLCPQKLKVQPHSSLEHCWK.

Topologically, residues 1-40 (MERAPPDGLMNASGALAGEAAAAAGGARTFSAAWTAVLAA) are extracellular. Asn11 carries an N-linked (GlcNAc...) asparagine glycan. The chain crosses the membrane as a helical span at residues 41–61 (LMALLIVATVLGNALVMLAFV). The Cytoplasmic segment spans residues 62-71 (ADSSLRTQNN). A helical transmembrane segment spans residues 72-92 (FFLLNLAISDFLVGVFCIPLY). Over 93 to 109 (VPYVLTGRWTFGRGLCK) the chain is Extracellular. Cysteines 108 and 189 form a disulfide. Residues 110–130 (LWLVVDYLLCTSSVFNIVLIS) traverse the membrane as a helical segment. Over 131 to 157 (YDRFLSVTRAVSYRAQQGDTRRAVRKM) the chain is Cytoplasmic. The chain crosses the membrane as a helical span at residues 158–178 (VLVWVLAFLLYGPAILSWEYL). The Extracellular portion of the chain corresponds to 179 to 197 (SGGSSIPEGHCYAEFFYNW). A helical transmembrane segment spans residues 198-218 (YFLITASTLEFFTPFLSVTFF). Residues 219–359 (NLSIYLNIQR…LSRDKKVAKS (141 aa)) are Cytoplasmic-facing. 2 disordered regions span residues 236–264 (GGAR…WGCW) and 288–336 (AGEA…LEKR). The span at 299–312 (AAASPTSSSGSSSR) shows a compositional bias: low complexity. The chain crosses the membrane as a helical span at residues 360 to 380 (LAIIVSIFGLCWAPYTLLMII). At 381 to 398 (RAACHGHCVPDYWYETSF) the chain is on the extracellular side. A helical transmembrane segment spans residues 399–419 (WLLWANSAVNPVLYPLCHYSF). Over 420-445 (RRAFTKLLCPQKLKVQPHSSLEHCWK) the chain is Cytoplasmic. Ser439 carries the post-translational modification Phosphoserine.

It belongs to the G-protein coupled receptor 1 family. As to expression, expressed widely and abundantly throughout the brain. Highly expressed in discrete neuronal populations such as pyramidal cells in cerebral cortex or cerebellar Purkinje cells.

It localises to the cell membrane. Functionally, the H3 subclass of histamine receptors could mediate the histamine signals in CNS and peripheral nervous system. Signals through the inhibition of adenylate cyclase and displays high constitutive activity (spontaneous activity in the absence of agonist). The polypeptide is Histamine H3 receptor (HRH3) (Cavia porcellus (Guinea pig)).